Here is a 123-residue protein sequence, read N- to C-terminus: MEEQKFHSLVKALNEHEGIEEVFLLNKDGSIIYKSGEFSLTDDEAKSILSAWKEKEPSLSFQNFRFAILKNDDLQLAAKNIGKGKGNIVGSITREGDYLIAHTRDEALILLEWSIFINKVAWS.

The protein belongs to the Asgard profilin family.

It localises to the cytoplasm. The protein localises to the cytoskeleton. Its function is as follows. Binds to actin and affects the structure of the cytoskeleton. At high concentrations inhibits spontaneous rabbit actin nucleation. This strongly suggests this archaea has a profilin-regulated actin system, and actin-type genes can be identified in this organism. In Lokiarchaeum sp. (strain GC14_75), this protein is Loki profilin-3.